Here is a 122-residue protein sequence, read N- to C-terminus: Large ribosomal subunit protein uL14 (122 aa).

Belongs to the universal ribosomal protein uL14 family. In terms of assembly, part of the 50S ribosomal subunit. Forms a cluster with proteins L3 and L19. In the 70S ribosome, L14 and L19 interact and together make contacts with the 16S rRNA in bridges B5 and B8.

Its function is as follows. Binds to 23S rRNA. Forms part of two intersubunit bridges in the 70S ribosome. The protein is Large ribosomal subunit protein uL14 of Acidiphilium cryptum (strain JF-5).